Here is a 360-residue protein sequence, read N- to C-terminus: Chorismate synthase (360 aa).

Residues 36 to 60 (LSEDDIQPDLDRRKPGTSKYTTPRR) form a disordered region. Arg-48 serves as a coordination point for NADP(+). FMN contacts are provided by residues 125 to 127 (RSS), 246 to 247 (NA), Gly-286, 301 to 305 (KPTSS), and Arg-327.

The protein belongs to the chorismate synthase family. Homotetramer. The cofactor is FMNH2.

It carries out the reaction 5-O-(1-carboxyvinyl)-3-phosphoshikimate = chorismate + phosphate. The protein operates within metabolic intermediate biosynthesis; chorismate biosynthesis; chorismate from D-erythrose 4-phosphate and phosphoenolpyruvate: step 7/7. Its function is as follows. Catalyzes the anti-1,4-elimination of the C-3 phosphate and the C-6 proR hydrogen from 5-enolpyruvylshikimate-3-phosphate (EPSP) to yield chorismate, which is the branch point compound that serves as the starting substrate for the three terminal pathways of aromatic amino acid biosynthesis. This reaction introduces a second double bond into the aromatic ring system. The polypeptide is Chorismate synthase (Histophilus somni (strain 129Pt) (Haemophilus somnus)).